The primary structure comprises 278 residues: Tryptophan synthase alpha chain (278 aa).

Catalysis depends on proton acceptor residues E50 and D61.

This sequence belongs to the TrpA family. Tetramer of two alpha and two beta chains.

The catalysed reaction is (1S,2R)-1-C-(indol-3-yl)glycerol 3-phosphate + L-serine = D-glyceraldehyde 3-phosphate + L-tryptophan + H2O. It functions in the pathway amino-acid biosynthesis; L-tryptophan biosynthesis; L-tryptophan from chorismate: step 5/5. Its function is as follows. The alpha subunit is responsible for the aldol cleavage of indoleglycerol phosphate to indole and glyceraldehyde 3-phosphate. In Rhodopseudomonas palustris (strain TIE-1), this protein is Tryptophan synthase alpha chain.